The primary structure comprises 147 residues: NADPH-dependent 7-cyano-7-deazaguanine reductase (147 aa).

The disordered stretch occupies residues 1–23; sequence MQTTHLGKNSPIPQSPEEASLDY. The Thioimide intermediate role is filled by Cys-46. Asp-53 acts as the Proton donor in catalysis. Residues 68 to 70 and 87 to 88 contribute to the substrate site; these read VES and HE.

The protein belongs to the GTP cyclohydrolase I family. QueF type 1 subfamily.

Its subcellular location is the cytoplasm. It catalyses the reaction 7-aminomethyl-7-carbaguanine + 2 NADP(+) = 7-cyano-7-deazaguanine + 2 NADPH + 3 H(+). It participates in tRNA modification; tRNA-queuosine biosynthesis. Its function is as follows. Catalyzes the NADPH-dependent reduction of 7-cyano-7-deazaguanine (preQ0) to 7-aminomethyl-7-deazaguanine (preQ1). The polypeptide is NADPH-dependent 7-cyano-7-deazaguanine reductase (Zymomonas mobilis subsp. mobilis (strain ATCC 31821 / ZM4 / CP4)).